Reading from the N-terminus, the 78-residue chain is Beta-defensin 105A (78 aa).

A signal peptide spans 1–27; sequence MALIRKTFYFLFAVFFILVQLPSGCQA. 3 cysteine pairs are disulfide-bonded: C46–C74, C53–C67, and C57–C73.

It belongs to the beta-defensin family.

It localises to the secreted. Functionally, has antimicrobial activity. The chain is Beta-defensin 105A (DEFB105A) from Hylobates lar (Lar gibbon).